Reading from the N-terminus, the 375-residue chain is Serpin B5 (375 aa).

N-linked (GlcNAc...) asparagine glycans are attached at residues Asn99, Asn133, Asn188, and Asn361.

It belongs to the serpin family. Ov-serpin subfamily. In terms of assembly, interacts with IRF6. As to expression, normal mammary epithelial cells.

It is found in the secreted. The protein localises to the extracellular space. In terms of biological role, tumor suppressor. It blocks the growth, invasion, and metastatic properties of mammary tumors. As it does not undergo the S (stressed) to R (relaxed) conformational transition characteristic of active serpins, it exhibits no serine protease inhibitory activity. This is Serpin B5 (SERPINB5) from Homo sapiens (Human).